The following is a 299-amino-acid chain: Tyrosine recombinase XerC (299 aa).

A Core-binding (CB) domain is found at 1–85 (MKRQLEAYCA…AVRGLYRYLN (85 aa)). The region spanning 106-285 (RLPKVLDTDR…DFQHLAAVYD (180 aa)) is the Tyr recombinase domain. Catalysis depends on residues arginine 146, lysine 170, histidine 237, arginine 240, and histidine 263. Catalysis depends on tyrosine 272, which acts as the O-(3'-phospho-DNA)-tyrosine intermediate.

The protein belongs to the 'phage' integrase family. XerC subfamily. In terms of assembly, forms a cyclic heterotetrameric complex composed of two molecules of XerC and two molecules of XerD.

The protein resides in the cytoplasm. Its function is as follows. Site-specific tyrosine recombinase, which acts by catalyzing the cutting and rejoining of the recombining DNA molecules. The XerC-XerD complex is essential to convert dimers of the bacterial chromosome into monomers to permit their segregation at cell division. It also contributes to the segregational stability of plasmids. The sequence is that of Tyrosine recombinase XerC from Pseudomonas putida (strain ATCC 700007 / DSM 6899 / JCM 31910 / BCRC 17059 / LMG 24140 / F1).